The chain runs to 59 residues: DNA-directed RNA polymerase subunit Rpo6 (59 aa).

Belongs to the archaeal Rpo6/eukaryotic RPB6 RNA polymerase subunit family. In terms of assembly, part of the RNA polymerase complex.

It is found in the cytoplasm. The catalysed reaction is RNA(n) + a ribonucleoside 5'-triphosphate = RNA(n+1) + diphosphate. In terms of biological role, DNA-dependent RNA polymerase (RNAP) catalyzes the transcription of DNA into RNA using the four ribonucleoside triphosphates as substrates. This is DNA-directed RNA polymerase subunit Rpo6 from Halorubrum lacusprofundi (strain ATCC 49239 / DSM 5036 / JCM 8891 / ACAM 34).